We begin with the raw amino-acid sequence, 102 residues long: Putative pterin-4-alpha-carbinolamine dehydratase (102 aa).

It belongs to the pterin-4-alpha-carbinolamine dehydratase family.

It catalyses the reaction (4aS,6R)-4a-hydroxy-L-erythro-5,6,7,8-tetrahydrobiopterin = (6R)-L-erythro-6,7-dihydrobiopterin + H2O. The protein is Putative pterin-4-alpha-carbinolamine dehydratase of Burkholderia orbicola (strain MC0-3).